A 573-amino-acid chain; its full sequence is Putative ABC transporter ATP-binding protein LJ_1704 (573 aa).

ABC transporter domains follow at residues 6–247 (IEFK…GVRE) and 303–536 (LKLD…ASLK). Residues 40 to 47 (GPSGSGKS) and 337 to 344 (GQNGAGKT) contribute to the ATP site.

This sequence belongs to the ABC transporter superfamily.

The protein resides in the cell membrane. Probably part of an ABC transporter complex. Responsible for energy coupling to the transport system. In Lactobacillus johnsonii (strain CNCM I-12250 / La1 / NCC 533), this protein is Putative ABC transporter ATP-binding protein LJ_1704.